Reading from the N-terminus, the 317-residue chain is tRNA dimethylallyltransferase (317 aa).

ATP is bound at residue 13–20; sequence GPTASGKS. Substrate is bound at residue 15–20; sequence TASGKS.

This sequence belongs to the IPP transferase family. In terms of assembly, monomer. Mg(2+) is required as a cofactor.

It catalyses the reaction adenosine(37) in tRNA + dimethylallyl diphosphate = N(6)-dimethylallyladenosine(37) in tRNA + diphosphate. Catalyzes the transfer of a dimethylallyl group onto the adenine at position 37 in tRNAs that read codons beginning with uridine, leading to the formation of N6-(dimethylallyl)adenosine (i(6)A). The chain is tRNA dimethylallyltransferase from Kineococcus radiotolerans (strain ATCC BAA-149 / DSM 14245 / SRS30216).